The following is an 81-amino-acid chain: Putative membrane protein insertion efficiency factor (81 aa).

Belongs to the UPF0161 family.

Its subcellular location is the cell inner membrane. Could be involved in insertion of integral membrane proteins into the membrane. This Pseudomonas syringae pv. syringae (strain B728a) protein is Putative membrane protein insertion efficiency factor.